A 51-amino-acid polypeptide reads, in one-letter code: Insulin (51 aa).

Disulfide bonds link C7–C37, C19–C50, and C36–C41.

Belongs to the insulin family. As to quaternary structure, heterodimer of a B chain and an A chain linked by two disulfide bonds.

The protein localises to the secreted. Functionally, insulin decreases blood glucose concentration. It increases cell permeability to monosaccharides, amino acids and fatty acids. It accelerates glycolysis, the pentose phosphate cycle, and glycogen synthesis in liver. The chain is Insulin (INS) from Acomys cahirinus (Cairo spiny mouse).